Here is a 252-residue protein sequence, read N- to C-terminus: 3-dehydroquinate dehydratase (252 aa).

3-dehydroquinate-binding positions include Ser21, 46–48 (EWR), and Arg82. His143 (proton donor/acceptor) is an active-site residue. Lys170 serves as the catalytic Schiff-base intermediate with substrate. Arg213, Ser232, and Gln236 together coordinate 3-dehydroquinate.

The protein belongs to the type-I 3-dehydroquinase family. Homodimer.

It catalyses the reaction 3-dehydroquinate = 3-dehydroshikimate + H2O. The protein operates within metabolic intermediate biosynthesis; chorismate biosynthesis; chorismate from D-erythrose 4-phosphate and phosphoenolpyruvate: step 3/7. Its function is as follows. Involved in the third step of the chorismate pathway, which leads to the biosynthesis of aromatic amino acids. Catalyzes the cis-dehydration of 3-dehydroquinate (DHQ) and introduces the first double bond of the aromatic ring to yield 3-dehydroshikimate. This chain is 3-dehydroquinate dehydratase, found in Escherichia coli O7:K1 (strain IAI39 / ExPEC).